The following is a 1188-amino-acid chain: Probable phosphoenolpyruvate synthase (1188 aa).

The region spanning 536–670 (LGGAVLSDGH…LIVGLYRLGI (135 aa)) is the DOD-type homing endonuclease domain. H824 acts as the Tele-phosphohistidine intermediate in catalysis. Residues R917, R964, E1061, G1083, T1084, N1085, and D1086 each coordinate substrate. Residue E1061 participates in Mg(2+) binding. Residue D1086 participates in Mg(2+) binding. C1133 functions as the Proton donor in the catalytic mechanism.

Belongs to the PEP-utilizing enzyme family. The cofactor is Mg(2+). Post-translationally, this protein undergoes a protein self splicing that involves a post-translational excision of the intervening region (intein) followed by peptide ligation.

The catalysed reaction is pyruvate + ATP + H2O = phosphoenolpyruvate + AMP + phosphate + 2 H(+). Its pathway is carbohydrate biosynthesis; gluconeogenesis. Functionally, catalyzes the phosphorylation of pyruvate to phosphoenolpyruvate. The protein is Probable phosphoenolpyruvate synthase (ppsA) of Methanocaldococcus jannaschii (strain ATCC 43067 / DSM 2661 / JAL-1 / JCM 10045 / NBRC 100440) (Methanococcus jannaschii).